The following is a 65-amino-acid chain: Muscarinic toxin-like protein 1 (65 aa).

Cystine bridges form between Cys3-Cys24, Cys17-Cys42, Cys46-Cys57, and Cys58-Cys63.

Belongs to the three-finger toxin family. Short-chain subfamily. Type C muscarinic toxin sub-subfamily. As to quaternary structure, monomer. Expressed by the venom gland.

It is found in the secreted. Binds weakly to the muscarinic acetylcholine receptor (CHRM). The protein is Muscarinic toxin-like protein 1 of Naja kaouthia (Monocled cobra).